Consider the following 339-residue polypeptide: Ferrochelatase (339 aa).

Residues H202 and E283 each coordinate Fe cation.

It belongs to the ferrochelatase family.

The protein resides in the cytoplasm. The catalysed reaction is heme b + 2 H(+) = protoporphyrin IX + Fe(2+). It functions in the pathway porphyrin-containing compound metabolism; protoheme biosynthesis; protoheme from protoporphyrin-IX: step 1/1. In terms of biological role, catalyzes the ferrous insertion into protoporphyrin IX. The protein is Ferrochelatase of Psychrobacter cryohalolentis (strain ATCC BAA-1226 / DSM 17306 / VKM B-2378 / K5).